A 152-amino-acid chain; its full sequence is Protein-export protein SecB (152 aa).

The protein belongs to the SecB family. Homotetramer, a dimer of dimers. One homotetramer interacts with 1 SecA dimer.

The protein localises to the cytoplasm. One of the proteins required for the normal export of preproteins out of the cell cytoplasm. It is a molecular chaperone that binds to a subset of precursor proteins, maintaining them in a translocation-competent state. It also specifically binds to its receptor SecA. The polypeptide is Protein-export protein SecB (Acinetobacter baumannii (strain AB307-0294)).